Reading from the N-terminus, the 282-residue chain is 2-dehydro-3-deoxyphosphooctonate aldolase (282 aa).

It belongs to the KdsA family.

The protein resides in the cytoplasm. It catalyses the reaction D-arabinose 5-phosphate + phosphoenolpyruvate + H2O = 3-deoxy-alpha-D-manno-2-octulosonate-8-phosphate + phosphate. It functions in the pathway carbohydrate biosynthesis; 3-deoxy-D-manno-octulosonate biosynthesis; 3-deoxy-D-manno-octulosonate from D-ribulose 5-phosphate: step 2/3. It participates in bacterial outer membrane biogenesis; lipopolysaccharide biosynthesis. The sequence is that of 2-dehydro-3-deoxyphosphooctonate aldolase from Shewanella sp. (strain ANA-3).